The primary structure comprises 167 residues: Small ribosomal subunit protein uS9 (167 aa).

The disordered stretch occupies residues 136–167; sequence KRAGFLTRDPRATERKKYGLKKARKAPQYSKR. Basic and acidic residues predominate over residues 143–152; the sequence is RDPRATERKK. The segment covering 153–167 has biased composition (basic residues); the sequence is YGLKKARKAPQYSKR.

The protein belongs to the universal ribosomal protein uS9 family.

This Nocardia farcinica (strain IFM 10152) protein is Small ribosomal subunit protein uS9.